The sequence spans 324 residues: Dehydrogenase/reductase SDR family member 7C-A (324 aa).

Positions 1–17 (MAVPSVMVLPLLIVVFA) are cleaved as a signal peptide. NAD(+) is bound at residue 41-65 (VITDAVSGMGSECARLFHAGGARLV). Serine 178 serves as a coordination point for substrate. The active-site Proton acceptor is the tyrosine 191.

It belongs to the short-chain dehydrogenases/reductases (SDR) family.

The protein localises to the secreted. Functionally, putative oxidoreductase. This Danio rerio (Zebrafish) protein is Dehydrogenase/reductase SDR family member 7C-A (dhrs7ca).